The following is a 215-amino-acid chain: ATP phosphoribosyltransferase (215 aa).

The protein belongs to the ATP phosphoribosyltransferase family. Short subfamily. As to quaternary structure, heteromultimer composed of HisG and HisZ subunits.

It localises to the cytoplasm. It carries out the reaction 1-(5-phospho-beta-D-ribosyl)-ATP + diphosphate = 5-phospho-alpha-D-ribose 1-diphosphate + ATP. It functions in the pathway amino-acid biosynthesis; L-histidine biosynthesis; L-histidine from 5-phospho-alpha-D-ribose 1-diphosphate: step 1/9. Catalyzes the condensation of ATP and 5-phosphoribose 1-diphosphate to form N'-(5'-phosphoribosyl)-ATP (PR-ATP). Has a crucial role in the pathway because the rate of histidine biosynthesis seems to be controlled primarily by regulation of HisG enzymatic activity. This chain is ATP phosphoribosyltransferase, found in Prochlorococcus marinus (strain MIT 9215).